We begin with the raw amino-acid sequence, 378 residues long: Zinc transporter 7 (378 aa).

Residues 1–37 are Cytoplasmic-facing; that stretch reads MLPLSIKDDEYKPPKFNLFGKISGWFRSILSDKTSRN. A helical membrane pass occupies residues 38–58; sequence LFFFLCLNLSFAFVELLYGIW. The Lumenal segment spans residues 59 to 67; the sequence is SNCLGLISD. The helical transmembrane segment at 68 to 88 threads the bilayer; the sequence is SFHMFFDSTAILAGLAASVIS. Topologically, residues 89 to 102 are cytoplasmic; that stretch reads KWRDNDAFSYGYVR. A helical membrane pass occupies residues 103–123; the sequence is AEVLAGFVNGLFLIFTAFFIF. Over 124–140 the chain is Lumenal; sequence SEGVERALAPPDVHHER. A helical membrane pass occupies residues 141–161; the sequence is LLLVSILGFVVNLVGIFVFNH. The his-rich loop stretch occupies residues 161–220; it reads HGGHGHSHGSGHGHSHSLFNGALDHSHGHEDHCHSHGAKHGGAHSHDHDHAHGHGHLHSH. Residues 162–238 are Cytoplasmic-facing; sequence GGHGHSHGSG…AGPSRQILQG (77 aa). The disordered stretch occupies residues 186–228; that stretch reads SHGHEDHCHSHGAKHGGAHSHDHDHAHGHGHLHSHDGPSFKET. Residues 204–224 are compositionally biased toward basic and acidic residues; it reads HSHDHDHAHGHGHLHSHDGPS. Residues 239–259 traverse the membrane as a helical segment; the sequence is VFLHILADTLGSIGVIASAIM. Over 260–264 the chain is Lumenal; that stretch reads MQNFG. The chain crosses the membrane as a helical span at residues 265 to 285; the sequence is LMIADPICSILIAILIVVSVI. Over 286-378 the chain is Cytoplasmic; sequence PLLRESIGIL…LYVQIDFAAM (93 aa).

This sequence belongs to the cation diffusion facilitator (CDF) transporter (TC 2.A.4) family. SLC30A subfamily. Homooligomer.

It is found in the golgi apparatus membrane. It localises to the cytoplasmic vesicle. Its subcellular location is the golgi apparatus. The protein resides in the trans-Golgi network. The protein localises to the sarcoplasmic reticulum. It is found in the mitochondrion. It catalyses the reaction Zn(2+)(in) = Zn(2+)(out). Functionally, zinc ion transporter mediating zinc entry from the cytosol into the lumen of organelles along the secretory pathway. By contributing to zinc ion homeostasis within the early secretory pathway, regulates the activation and folding of enzymes like alkaline phosphatases. The polypeptide is Zinc transporter 7 (Rattus norvegicus (Rat)).